The sequence spans 81 residues: Acyl carrier protein (81 aa).

The Carrier domain occupies 3 to 78; that stretch reads QEIFEKVKSI…AAVDYIEKEQ (76 aa). The residue at position 38 (serine 38) is an O-(pantetheine 4'-phosphoryl)serine.

The protein belongs to the acyl carrier protein (ACP) family. 4'-phosphopantetheine is transferred from CoA to a specific serine of apo-ACP by AcpS. This modification is essential for activity because fatty acids are bound in thioester linkage to the sulfhydryl of the prosthetic group.

Its subcellular location is the cytoplasm. Its pathway is lipid metabolism; fatty acid biosynthesis. In terms of biological role, carrier of the growing fatty acid chain in fatty acid biosynthesis. This is Acyl carrier protein from Crocosphaera subtropica (strain ATCC 51142 / BH68) (Cyanothece sp. (strain ATCC 51142)).